Here is a 203-residue protein sequence, read N- to C-terminus: Protein-methionine-sulfoxide reductase heme-binding subunit MsrQ (203 aa).

The next 6 membrane-spanning stretches (helical) occupy residues 10–30 (IFVV…MSLL), 42–62 (LGLG…LQKL), 75–95 (LGLW…FFIL), 110–130 (PYII…ITSN), 147–167 (LVYA…RSDL), and 169–189 (EWSI…PAVA).

Belongs to the MsrQ family. Heterodimer of a catalytic subunit (MsrP) and a heme-binding subunit (MsrQ). Requires FMN as cofactor. Heme b serves as cofactor.

The protein localises to the cell inner membrane. Its function is as follows. Part of the MsrPQ system that repairs oxidized periplasmic proteins containing methionine sulfoxide residues (Met-O), using respiratory chain electrons. Thus protects these proteins from oxidative-stress damage caused by reactive species of oxygen and chlorine generated by the host defense mechanisms. MsrPQ is essential for the maintenance of envelope integrity under bleach stress, rescuing a wide series of structurally unrelated periplasmic proteins from methionine oxidation. MsrQ provides electrons for reduction to the reductase catalytic subunit MsrP, using the quinone pool of the respiratory chain. This Pseudomonas putida (strain GB-1) protein is Protein-methionine-sulfoxide reductase heme-binding subunit MsrQ.